Reading from the N-terminus, the 239-residue chain is Leucine-rich repeat-containing protein 57 (239 aa).

A lipid anchor (N-myristoyl glycine) is attached at G2. LRR repeat units lie at residues 39-60 (NLRT…LIGK), 63-84 (LLKS…ICNL), 86-107 (KLET…FGQL), 109-131 (ALKT…CSLR), 132-153 (HLDV…VGEL), 154-175 (QVIE…ISCC), 177-197 (RLKI…PQSI), and 202-222 (QICL…RELE).

It localises to the membrane. This is Leucine-rich repeat-containing protein 57 (LRRC57) from Homo sapiens (Human).